Here is a 923-residue protein sequence, read N- to C-terminus: Periplasmic nitrate reductase (923 aa).

A signal peptide (tat-type signal) is located at residues 1–30; the sequence is MNRRDFIKNTAIASAASVAGLSVPSSMLGA. The 57-residue stretch at 34–90 folds into the 4Fe-4S Mo/W bis-MGD-type domain; the sequence is WKWDKAVCRFCGTGCGIMIARKDGKIVATKGDPAAPVNRGLNCIKGYFNAKIMYGED. [4Fe-4S] cluster contacts are provided by cysteine 41, cysteine 44, cysteine 48, and cysteine 76. Mo-bis(molybdopterin guanine dinucleotide) is bound by residues lysine 78, glutamine 146, asparagine 171, cysteine 175, 208-215, methionine 416, glutamine 420, asparagine 526, 551-552, lysine 574, aspartate 601, and 813-822; these read WGANMAEM, SD, and TGRVLEHWHS. Tryptophan 889 is a substrate binding site. Mo-bis(molybdopterin guanine dinucleotide) contacts are provided by asparagine 897 and lysine 914.

The protein belongs to the prokaryotic molybdopterin-containing oxidoreductase family. NasA/NapA/NarB subfamily. As to quaternary structure, component of the periplasmic nitrate reductase NapAB complex composed of NapA and NapB. [4Fe-4S] cluster is required as a cofactor. The cofactor is Mo-bis(molybdopterin guanine dinucleotide). Post-translationally, predicted to be exported by the Tat system. The position of the signal peptide cleavage has not been experimentally proven.

Its subcellular location is the periplasm. It carries out the reaction 2 Fe(II)-[cytochrome] + nitrate + 2 H(+) = 2 Fe(III)-[cytochrome] + nitrite + H2O. Its function is as follows. Catalytic subunit of the periplasmic nitrate reductase complex NapAB. Receives electrons from NapB and catalyzes the reduction of nitrate to nitrite. The protein is Periplasmic nitrate reductase of Campylobacter jejuni subsp. jejuni serotype O:23/36 (strain 81-176).